Consider the following 183-residue polypeptide: Putative 3-methyladenine DNA glycosylase (183 aa).

It belongs to the DNA glycosylase MPG family.

The chain is Putative 3-methyladenine DNA glycosylase from Rickettsia africae (strain ESF-5).